The primary structure comprises 231 residues: L-ribulose-5-phosphate 4-epimerase SgbE (231 aa).

Substrate contacts are provided by residues glycine 27–asparagine 28, serine 44–glycine 45, and serine 74–serine 75. Zn(2+)-binding residues include aspartate 76, histidine 95, and histidine 97. Aspartate 120 functions as the Proton donor/acceptor in the catalytic mechanism. Histidine 171 provides a ligand contact to Zn(2+). Tyrosine 229 functions as the Proton donor/acceptor in the catalytic mechanism.

This sequence belongs to the aldolase class II family. AraD/FucA subfamily. It depends on Zn(2+) as a cofactor.

It carries out the reaction L-ribulose 5-phosphate = D-xylulose 5-phosphate. Catalyzes the interconversion of L-ribulose 5-phosphate (LRu5P) and D-xylulose 5-phosphate (D-Xu5P) via a retroaldol/aldol mechanism (carbon-carbon bond cleavage analogous to a class II aldolase reaction). May be involved in the utilization of 2,3-diketo-L-gulonate. This chain is L-ribulose-5-phosphate 4-epimerase SgbE, found in Escherichia coli (strain K12).